Reading from the N-terminus, the 484-residue chain is MWYVSTRGVAPRVNFEGALFSGYAPDGGLFMPEELPQLDRGTLCQWSTLSYPGLVKELCALFIGSELLPKDELNDLIDRAFSRFRHREVVHLSRLRNGLNVLELWHGVTYAFKDLSLSCTTQFLQYFLEKREKHVTVVVGTSGDTGSAAIESVQGAKNMDIIVLLPKGHCTKIQELQMTTVLKQNVHVFGVEGNSDELDEPIKTVFADVAFVKKHNLMSLNSINWSRVLVQMAHHFFAYFQCTPSLDTHPLPLVEVVVPTGAAGNLAAGYIAQKIGLPIRLVVAVNRNDIIHRTVQQGDFSLSEAVKSTLASAMDIQVPYNMERVFWLLSGSDSQVTRALMEQFERTQSVNLPKELHSKLSEAVTSVSVSDEAITQTMGRCWDENQYLLCPHSAVAVNYHYQQIDRQQPSTPRCCLAPASAAKFPEAVLAAGLTPETPAEIVALEHKETRCTLMRRGDNWMLMLRDTIEDLSRQWRSHALNTSQ.

Residue Lys-113 is modified to N6-(pyridoxal phosphate)lysine.

This sequence belongs to the threonine synthase family. The cofactor is pyridoxal 5'-phosphate.

The protein localises to the secreted. In terms of biological role, acts as a catabolic phospho-lyase on both gamma- and beta-phosphorylated substrates. Degrades O-phospho-threonine (PThr) to alpha-ketobutyrate, ammonia and phosphate. Potent inducer of osteoblastic production of IL6. May act to exacerbate inflammation and/or bone turnover under inflammatory conditions. The sequence is that of Threonine synthase-like 2 (THNSL2) from Homo sapiens (Human).